Reading from the N-terminus, the 65-residue chain is Beta-defensin 106A (65 aa).

The first 20 residues, 1 to 20 (MRTFLFLFVVLFFLTPAKNA), serve as a signal peptide directing secretion. Disulfide bonds link cysteine 26–cysteine 53, cysteine 33–cysteine 47, and cysteine 37–cysteine 54.

This sequence belongs to the beta-defensin family. As to quaternary structure, monomer. Interacts with CCR2 (via extracellular N-terminal region); this interaction may preferentially require specific tyrosine sulfation on CCR2.

The protein resides in the secreted. The protein localises to the membrane. Its function is as follows. Has antibacterial activity. Acts as a ligand for C-C chemokine receptor CCR2. This chain is Beta-defensin 106A (DEFB106A), found in Hylobates lar (Lar gibbon).